Consider the following 666-residue polypeptide: UvrABC system protein B (666 aa).

Positions 26 to 414 (DSFQKGEKKV…KVVEQIIRPT (389 aa)) constitute a Helicase ATP-binding domain. 39–46 (GVTGSGKT) provides a ligand contact to ATP. A Beta-hairpin motif is present at residues 92 to 115 (YYDYYQPEAYVPSSDTFIEKDSSI). The Helicase C-terminal domain maps to 429-591 (QIEDLLVEIR…ITPLTIKKEV (163 aa)). Residues 625–660 (EVLKEKLREEMMKAAKELDFERAAILRDKMLSIQTE) enclose the UVR domain.

Belongs to the UvrB family. As to quaternary structure, forms a heterotetramer with UvrA during the search for lesions. Interacts with UvrC in an incision complex.

It is found in the cytoplasm. Functionally, the UvrABC repair system catalyzes the recognition and processing of DNA lesions. A damage recognition complex composed of 2 UvrA and 2 UvrB subunits scans DNA for abnormalities. Upon binding of the UvrA(2)B(2) complex to a putative damaged site, the DNA wraps around one UvrB monomer. DNA wrap is dependent on ATP binding by UvrB and probably causes local melting of the DNA helix, facilitating insertion of UvrB beta-hairpin between the DNA strands. Then UvrB probes one DNA strand for the presence of a lesion. If a lesion is found the UvrA subunits dissociate and the UvrB-DNA preincision complex is formed. This complex is subsequently bound by UvrC and the second UvrB is released. If no lesion is found, the DNA wraps around the other UvrB subunit that will check the other stand for damage. This Leptospira interrogans serogroup Icterohaemorrhagiae serovar copenhageni (strain Fiocruz L1-130) protein is UvrABC system protein B.